The primary structure comprises 148 residues: MEEKVGNLKPNMESVNVTVRVLEASEARQIQTKNGVRTISEAIVGDETGRVKLTLWGKHAGSIKEGQVVKIENAWTTAFKGQVQLNAGSKTKIAEASEDGFPESSQIPENTPTAPQQMRGGGRGFRGGGRRYGRRGGRRQENEEGEEE.

The OB DNA-binding region spans 19–88 (VRVLEASEAR…FKGQVQLNAG (70 aa)). Residues 90 to 148 (KTKIAEASEDGFPESSQIPENTPTAPQQMRGGGRGFRGGGRRYGRRGGRRQENEEGEEE) form a disordered region. Residues 103 to 116 (ESSQIPENTPTAPQ) show a composition bias toward polar residues. Residues 128–137 (GGRRYGRRGG) show a composition bias toward basic residues.

In terms of assembly, monomer in solution, may bind ssDNA as an array of monomers.

The protein resides in the cytoplasm. It localises to the chromosome. Functionally, binds to ssDNA, binds approximately 5 nucleotides per monomer, binding may be slightly cooperative. Inhibits the endonuclease activity of XPF. Stimulates reverse gyrase from S.shibatae strain B12 (rgy). The chain is Single-stranded DNA binding protein Ssb (ssb) from Saccharolobus solfataricus (strain ATCC 35092 / DSM 1617 / JCM 11322 / P2) (Sulfolobus solfataricus).